The primary structure comprises 61 residues: Large ribosomal subunit protein eL37 (61 aa).

Zn(2+) contacts are provided by Cys-19, Cys-22, Cys-34, and Cys-37. Residues 19 to 37 (CRRCGRNAYNVSKHYCAAC) form a C4-type zinc finger.

The protein belongs to the eukaryotic ribosomal protein eL37 family. It depends on Zn(2+) as a cofactor.

Its function is as follows. Binds to the 23S rRNA. The polypeptide is Large ribosomal subunit protein eL37 (rpl37e) (Saccharolobus solfataricus (strain ATCC 35092 / DSM 1617 / JCM 11322 / P2) (Sulfolobus solfataricus)).